The chain runs to 399 residues: Serine/threonine-protein kinase PknL (399 aa).

At 1–368 the chain is on the cytoplasmic side; sequence MVEAGTRDPL…FIWARQHARR (368 aa). The Protein kinase domain maps to 19–278; that stretch reads YLVQAKIASG…IAMGADLEAI (260 aa). Residues 25–33 and lysine 48 each bind ATP; that span reads IASGGTSTV. Aspartate 142 (proton acceptor) is an active-site residue. A disordered region spans residues 312-346; the sequence is GQLGAKPVHHPTRQLTRQPGDCSEPASGSEPEHEP. Residues 369–389 form a helical membrane-spanning segment; the sequence is MVLVWVSVVLAITGLVASAAW. The Extracellular portion of the chain corresponds to 390 to 399; that stretch reads TIGSNLSGLL.

This sequence belongs to the protein kinase superfamily. Ser/Thr protein kinase family. Autophosphorylated.

It localises to the cell membrane. It catalyses the reaction L-seryl-[protein] + ATP = O-phospho-L-seryl-[protein] + ADP + H(+). The enzyme catalyses L-threonyl-[protein] + ATP = O-phospho-L-threonyl-[protein] + ADP + H(+). The protein is Serine/threonine-protein kinase PknL (pknL) of Mycobacterium bovis (strain ATCC BAA-935 / AF2122/97).